We begin with the raw amino-acid sequence, 93 residues long: Protein VNG_0358C (93 aa).

This chain is Protein VNG_0358C, found in Halobacterium salinarum (strain ATCC 700922 / JCM 11081 / NRC-1) (Halobacterium halobium).